The sequence spans 419 residues: S-adenosylmethionine synthase (419 aa).

ATP is bound at residue H15. D17 is a binding site for Mg(2+). K(+) is bound at residue E43. L-methionine is bound by residues E56 and Q100. Positions 100–110 are flexible loop; that stretch reads QSPDIAQGVNE. Residues 171–173, 248–249, D257, 263–264, A280, and K284 each bind ATP; these read DGK, KF, and RK. D257 serves as a coordination point for L-methionine. K288 serves as a coordination point for L-methionine.

Belongs to the AdoMet synthase family. As to quaternary structure, homotetramer; dimer of dimers. Mg(2+) serves as cofactor. The cofactor is K(+).

The protein resides in the cytoplasm. The enzyme catalyses L-methionine + ATP + H2O = S-adenosyl-L-methionine + phosphate + diphosphate. Its pathway is amino-acid biosynthesis; S-adenosyl-L-methionine biosynthesis; S-adenosyl-L-methionine from L-methionine: step 1/1. Its function is as follows. Catalyzes the formation of S-adenosylmethionine (AdoMet) from methionine and ATP. The overall synthetic reaction is composed of two sequential steps, AdoMet formation and the subsequent tripolyphosphate hydrolysis which occurs prior to release of AdoMet from the enzyme. This Prochlorococcus marinus (strain MIT 9313) protein is S-adenosylmethionine synthase.